We begin with the raw amino-acid sequence, 288 residues long: Serine/threonine-protein phosphatase PGAM5, mitochondrial (288 aa).

Residues 1–6 (MAFRQA) lie on the Mitochondrial matrix side of the membrane. A helical membrane pass occupies residues 7–29 (LQLAACGLAGGSAAVLFSAVAVG). Topologically, residues 30 to 288 (KPRAGGDADT…FMPPDKITRS (259 aa)) are mitochondrial intermembrane. Positions 76–81 (NVEFGE) are interaction with KEAP1. S86 is subject to Phosphoserine. Residues K115, K143, and K190 each carry the N6-acetyllysine modification.

The protein belongs to the phosphoglycerate mutase family. BPG-dependent PGAM subfamily. As to quaternary structure, dimer. Forms a ternary complex with NFE2L2 and KEAP1. Interacts with BCL2L1 and MAP3K5. Upon TNF-induced necrosis, forms in complex with RIPK1, RIPK3 and MLKL; the formation of this complex leads to PGAM5 phosphorylation. Isoform 2, but not isoform 1, interacts with DNM1L; this interaction leads to DNM1L dephosphorylation and activation and eventually to mitochondria fragmentation. In terms of processing, phosphorylated by the RIPK1/RIPK3 complex under necrotic conditions. This phosphorylation increases PGAM5 phosphatase activity. Post-translationally, proteolytically cleaved by PARL in response to loss of mitochondrial membrane potential.

Its subcellular location is the mitochondrion outer membrane. The protein resides in the mitochondrion inner membrane. It carries out the reaction O-phospho-L-seryl-[protein] + H2O = L-seryl-[protein] + phosphate. The catalysed reaction is O-phospho-L-threonyl-[protein] + H2O = L-threonyl-[protein] + phosphate. Functionally, mitochondrial serine/threonine phosphatase that dephosphorylates various substrates and thus plays a role in different biological processes including cellular senescence or mitophagy. Modulates cellular senescence by regulating mitochondrial dynamics. Mechanistically, participates in mitochondrial fission through dephosphorylating DNM1L/DRP1. Additionally, dephosphorylates MFN2 in a stress-sensitive manner and consequently protects it from ubiquitination and degradation to promote mitochondrial network formation. Regulates mitophagy independent of PARKIN by interacting with and dephosphorylating FUNDC1, which interacts with LC3. Regulates anti-oxidative response by forming a tertiary complex with KEAP1 and NRF2. Regulates necroptosis by acting as a RIPK3 target and recruiting the RIPK1-RIPK3-MLKL necrosis 'attack' complex to mitochondria. In Rattus norvegicus (Rat), this protein is Serine/threonine-protein phosphatase PGAM5, mitochondrial (Pgam5).